Reading from the N-terminus, the 109-residue chain is Small ribosomal subunit protein bS6 (109 aa).

It belongs to the bacterial ribosomal protein bS6 family.

Its function is as follows. Binds together with bS18 to 16S ribosomal RNA. The sequence is that of Small ribosomal subunit protein bS6 from Ehrlichia ruminantium (strain Gardel).